Consider the following 34-residue polypeptide: Photosystem II reaction center protein Psb30 (34 aa).

A helical transmembrane segment spans residues 9–29; that stretch reads QLIATGTIMLAGPAVIVLLAL.

It belongs to the Psb30/Ycf12 family. In terms of assembly, PSII is composed of 1 copy each of membrane proteins PsbA, PsbB, PsbC, PsbD, PsbE, PsbF, PsbH, PsbI, PsbJ, PsbK, PsbL, PsbM, PsbT, PsbX, PsbY, PsbZ, Psb30/Ycf12, peripheral proteins of the oxygen-evolving complex and a large number of cofactors. It forms dimeric complexes.

The protein resides in the plastid. The protein localises to the chloroplast thylakoid membrane. In terms of biological role, a core subunit of photosystem II (PSII), probably helps stabilize the reaction center. This is Photosystem II reaction center protein Psb30 from Phaeodactylum tricornutum (strain CCAP 1055/1).